Reading from the N-terminus, the 90-residue chain is Probable Fe(2+)-trafficking protein (90 aa).

It belongs to the Fe(2+)-trafficking protein family. As to quaternary structure, monomer.

Its function is as follows. Could be a mediator in iron transactions between iron acquisition and iron-requiring processes, such as synthesis and/or repair of Fe-S clusters in biosynthetic enzymes. This chain is Probable Fe(2+)-trafficking protein, found in Edwardsiella ictaluri (strain 93-146).